Here is a 478-residue protein sequence, read N- to C-terminus: Histidine--tRNA ligase (478 aa).

It belongs to the class-II aminoacyl-tRNA synthetase family. As to quaternary structure, homodimer.

It is found in the cytoplasm. The enzyme catalyses tRNA(His) + L-histidine + ATP = L-histidyl-tRNA(His) + AMP + diphosphate + H(+). In Xanthomonas axonopodis pv. citri (strain 306), this protein is Histidine--tRNA ligase (hisS).